Here is a 129-residue protein sequence, read N- to C-terminus: Large ribosomal subunit protein bL17 (129 aa).

This sequence belongs to the bacterial ribosomal protein bL17 family. As to quaternary structure, part of the 50S ribosomal subunit. Contacts protein L32.

The protein is Large ribosomal subunit protein bL17 of Acidovorax ebreus (strain TPSY) (Diaphorobacter sp. (strain TPSY)).